The following is a 485-amino-acid chain: Probable glycine dehydrogenase (decarboxylating) subunit 2 (485 aa).

The residue at position 273 (K273) is an N6-(pyridoxal phosphate)lysine.

Belongs to the GcvP family. C-terminal subunit subfamily. In terms of assembly, the glycine cleavage system is composed of four proteins: P, T, L and H. In this organism, the P 'protein' is a heterodimer of two subunits. Pyridoxal 5'-phosphate is required as a cofactor.

The enzyme catalyses N(6)-[(R)-lipoyl]-L-lysyl-[glycine-cleavage complex H protein] + glycine + H(+) = N(6)-[(R)-S(8)-aminomethyldihydrolipoyl]-L-lysyl-[glycine-cleavage complex H protein] + CO2. Functionally, the glycine cleavage system catalyzes the degradation of glycine. The P protein binds the alpha-amino group of glycine through its pyridoxal phosphate cofactor; CO(2) is released and the remaining methylamine moiety is then transferred to the lipoamide cofactor of the H protein. This chain is Probable glycine dehydrogenase (decarboxylating) subunit 2, found in Bacillus licheniformis (strain ATCC 14580 / DSM 13 / JCM 2505 / CCUG 7422 / NBRC 12200 / NCIMB 9375 / NCTC 10341 / NRRL NRS-1264 / Gibson 46).